The sequence spans 92 residues: Small ribosomal subunit protein uS19 (92 aa).

Belongs to the universal ribosomal protein uS19 family.

Protein S19 forms a complex with S13 that binds strongly to the 16S ribosomal RNA. In Hyphomonas neptunium (strain ATCC 15444), this protein is Small ribosomal subunit protein uS19.